We begin with the raw amino-acid sequence, 126 residues long: MQSLGRHVLAEIYGCRFEVLNDVKKVEDIMVNAALEAGAEIREFVFHKFSPQGVSGVVVISESHLAIHTWPELGYAALDVFTCGDRVNPWDACNYVAEMFSAGDMKASEVKRGLMEQPEERLVANM.

Serine 63 functions as the Schiff-base intermediate with substrate; via pyruvic acid in the catalytic mechanism. Serine 63 is modified (pyruvic acid (Ser); by autocatalysis). Histidine 68 (proton acceptor; for processing activity) is an active-site residue. The active-site Proton donor; for catalytic activity is the cysteine 83.

The protein belongs to the prokaryotic AdoMetDC family. Type 1 subfamily. As to quaternary structure, heterotetramer of two alpha and two beta chains arranged as a dimer of alpha/beta heterodimers. Requires pyruvate as cofactor. Post-translationally, is synthesized initially as an inactive proenzyme. Formation of the active enzyme involves a self-maturation process in which the active site pyruvoyl group is generated from an internal serine residue via an autocatalytic post-translational modification. Two non-identical subunits are generated from the proenzyme in this reaction, and the pyruvate is formed at the N-terminus of the alpha chain, which is derived from the carboxyl end of the proenzyme. The post-translation cleavage follows an unusual pathway, termed non-hydrolytic serinolysis, in which the side chain hydroxyl group of the serine supplies its oxygen atom to form the C-terminus of the beta chain, while the remainder of the serine residue undergoes an oxidative deamination to produce ammonia and the pyruvoyl group blocking the N-terminus of the alpha chain.

It catalyses the reaction S-adenosyl-L-methionine + H(+) = S-adenosyl 3-(methylsulfanyl)propylamine + CO2. It participates in amine and polyamine biosynthesis; S-adenosylmethioninamine biosynthesis; S-adenosylmethioninamine from S-adenosyl-L-methionine: step 1/1. Its function is as follows. Catalyzes the decarboxylation of S-adenosylmethionine to S-adenosylmethioninamine (dcAdoMet), the propylamine donor required for the synthesis of the polyamines spermine and spermidine from the diamine putrescine. The sequence is that of S-adenosylmethionine decarboxylase proenzyme from Syntrophomonas wolfei subsp. wolfei (strain DSM 2245B / Goettingen).